The sequence spans 413 residues: Arginine biosynthesis bifunctional protein ArgJ (413 aa).

Substrate-binding residues include T158, K184, T195, E285, N408, and S413. Catalysis depends on T195, which acts as the Nucleophile.

Belongs to the ArgJ family. In terms of assembly, heterotetramer of two alpha and two beta chains.

It localises to the cytoplasm. The catalysed reaction is N(2)-acetyl-L-ornithine + L-glutamate = N-acetyl-L-glutamate + L-ornithine. The enzyme catalyses L-glutamate + acetyl-CoA = N-acetyl-L-glutamate + CoA + H(+). It participates in amino-acid biosynthesis; L-arginine biosynthesis; L-ornithine and N-acetyl-L-glutamate from L-glutamate and N(2)-acetyl-L-ornithine (cyclic): step 1/1. The protein operates within amino-acid biosynthesis; L-arginine biosynthesis; N(2)-acetyl-L-ornithine from L-glutamate: step 1/4. In terms of biological role, catalyzes two activities which are involved in the cyclic version of arginine biosynthesis: the synthesis of N-acetylglutamate from glutamate and acetyl-CoA as the acetyl donor, and of ornithine by transacetylation between N(2)-acetylornithine and glutamate. In Bradyrhizobium diazoefficiens (strain JCM 10833 / BCRC 13528 / IAM 13628 / NBRC 14792 / USDA 110), this protein is Arginine biosynthesis bifunctional protein ArgJ.